A 261-amino-acid polypeptide reads, in one-letter code: Putative hydro-lyase VSAL_I1435 (261 aa).

This sequence belongs to the D-glutamate cyclase family.

The sequence is that of Putative hydro-lyase VSAL_I1435 from Aliivibrio salmonicida (strain LFI1238) (Vibrio salmonicida (strain LFI1238)).